The following is a 149-amino-acid chain: Deoxyuridine 5'-triphosphate nucleotidohydrolase (149 aa).

Residues 68–70 (RSG), Asn-81, 85–87 (LID), and Met-95 contribute to the substrate site.

This sequence belongs to the dUTPase family. Mg(2+) is required as a cofactor.

It catalyses the reaction dUTP + H2O = dUMP + diphosphate + H(+). It functions in the pathway pyrimidine metabolism; dUMP biosynthesis; dUMP from dCTP (dUTP route): step 2/2. Functionally, this enzyme is involved in nucleotide metabolism: it produces dUMP, the immediate precursor of thymidine nucleotides and it decreases the intracellular concentration of dUTP so that uracil cannot be incorporated into DNA. In Herminiimonas arsenicoxydans, this protein is Deoxyuridine 5'-triphosphate nucleotidohydrolase.